The following is a 376-amino-acid chain: Zinc transporter 7 (376 aa).

The Cytoplasmic portion of the chain corresponds to 1–37 (MLPLSIKDDEYKPPKFNLFGKISGWFRSILSDKTSRN). Residues 38–58 (LFFFLCLNLSFAFVELLYGIW) traverse the membrane as a helical segment. The Lumenal portion of the chain corresponds to 59 to 67 (SNCLGLISD). The helical transmembrane segment at 68 to 88 (SFHMFFDSTAILAGLAASVIS) threads the bilayer. Residues 89–102 (KWRDNDAFSYGYVR) are Cytoplasmic-facing. Residues 103-123 (AEVLAGFVNGLFLIFTAFFIF) traverse the membrane as a helical segment. Residues 124-140 (SEGVERALAPPDVHHER) lie on the Lumenal side of the membrane. The helical transmembrane segment at 141–161 (LLLVSILGFVVNLIGIFVFKH) threads the bilayer. The interval 161–218 (HGGHGHSHGSGHGHSHSLFNGALDQAHGHVDHCHSHEVKHGAAHSHDHAHGHGHFHSH) is his-rich loop. Topologically, residues 162–236 (GGHGHSHGSG…TGPSRQILQG (75 aa)) are cytoplasmic. A compositionally biased stretch (basic and acidic residues) spans 194 to 222 (HSHEVKHGAAHSHDHAHGHGHFHSHDGPS). The segment at 194-226 (HSHEVKHGAAHSHDHAHGHGHFHSHDGPSLKET) is disordered. Residues 237 to 257 (VFLHILADTLGSIGVIASAIM) traverse the membrane as a helical segment. Over 258–262 (MQNFG) the chain is Lumenal. The helical transmembrane segment at 263–283 (LMIADPICSILIAILIVVSVI) threads the bilayer. Residues 284 to 376 (PLLRESVGIL…LYVQIDFAAM (93 aa)) are Cytoplasmic-facing.

Belongs to the cation diffusion facilitator (CDF) transporter (TC 2.A.4) family. SLC30A subfamily. In terms of assembly, homooligomer. In terms of tissue distribution, highly expressed in megakaryocytes and other bone marrow cells and in the epithelium of the small intestine. Expressed in testis (in Leydig cells), adrenal gland (in adrenal medula, zona fasciculata and zona of reticularis), and pituitary gland (in somatotropic cells).

It localises to the golgi apparatus membrane. Its subcellular location is the cytoplasmic vesicle. The protein resides in the golgi apparatus. The protein localises to the trans-Golgi network. It is found in the sarcoplasmic reticulum. It localises to the mitochondrion. The enzyme catalyses Zn(2+)(in) = Zn(2+)(out). Its function is as follows. Zinc ion transporter mediating zinc entry from the cytosol into the lumen of organelles along the secretory pathway. By contributing to zinc ion homeostasis within the early secretory pathway, regulates the activation and folding of enzymes like alkaline phosphatases. This is Zinc transporter 7 from Homo sapiens (Human).